A 129-amino-acid polypeptide reads, in one-letter code: Large ribosomal subunit protein bL20 (129 aa).

The protein belongs to the bacterial ribosomal protein bL20 family.

In terms of biological role, binds directly to 23S ribosomal RNA and is necessary for the in vitro assembly process of the 50S ribosomal subunit. It is not involved in the protein synthesizing functions of that subunit. The sequence is that of Large ribosomal subunit protein bL20 from Mycobacterium tuberculosis (strain ATCC 25177 / H37Ra).